We begin with the raw amino-acid sequence, 324 residues long: Aspartate carbamoyltransferase catalytic subunit (324 aa).

Carbamoyl phosphate contacts are provided by Arg71 and Thr72. Position 99 (Lys99) interacts with L-aspartate. Positions 121, 151, and 154 each coordinate carbamoyl phosphate. L-aspartate is bound by residues Arg184 and Arg239. 2 residues coordinate carbamoyl phosphate: Gly280 and Pro281.

The protein belongs to the aspartate/ornithine carbamoyltransferase superfamily. ATCase family. Heterododecamer (2C3:3R2) of six catalytic PyrB chains organized as two trimers (C3), and six regulatory PyrI chains organized as three dimers (R2).

The catalysed reaction is carbamoyl phosphate + L-aspartate = N-carbamoyl-L-aspartate + phosphate + H(+). It functions in the pathway pyrimidine metabolism; UMP biosynthesis via de novo pathway; (S)-dihydroorotate from bicarbonate: step 2/3. Catalyzes the condensation of carbamoyl phosphate and aspartate to form carbamoyl aspartate and inorganic phosphate, the committed step in the de novo pyrimidine nucleotide biosynthesis pathway. This chain is Aspartate carbamoyltransferase catalytic subunit, found in Cupriavidus necator (strain ATCC 17699 / DSM 428 / KCTC 22496 / NCIMB 10442 / H16 / Stanier 337) (Ralstonia eutropha).